Consider the following 280-residue polypeptide: MKVILAKRAGFCFGVKRATQMAFEAAGKDQKTFTLGPIIHSPQVVNKLEEMGVGVVKDLSGVSNGTVIIRSHGVLASEMDEAHQKQLEVVDATCPFVKKAQEHVQYLSEAGYDVLVVGDADHPEVQGIVSYGKEKVYVVASGDQVKQLPKMGKMGVVAQTTQSFDNLKSVVTECLRRGGEVRVYNTICDATAVRQQEATELAQQVDCMIVIGGFNSANTRRLAEICTEIQPRTYHIETAAEIDCSWFQGVDTVGVTAGASTPKWIIDEVMNRLDQVNNSH.

A [4Fe-4S] cluster-binding site is contributed by Cys-12. Positions 40 and 72 each coordinate (2E)-4-hydroxy-3-methylbut-2-enyl diphosphate. The dimethylallyl diphosphate site is built by His-40 and His-72. Isopentenyl diphosphate is bound by residues His-40 and His-72. Residue Cys-94 participates in [4Fe-4S] cluster binding. Residue His-122 coordinates (2E)-4-hydroxy-3-methylbut-2-enyl diphosphate. Residue His-122 coordinates dimethylallyl diphosphate. His-122 serves as a coordination point for isopentenyl diphosphate. The active-site Proton donor is Glu-124. Thr-160 is a (2E)-4-hydroxy-3-methylbut-2-enyl diphosphate binding site. Cys-188 contacts [4Fe-4S] cluster. 3 residues coordinate (2E)-4-hydroxy-3-methylbut-2-enyl diphosphate: Ser-216, Asn-218, and Ser-260. Residues Ser-216, Asn-218, and Ser-260 each coordinate dimethylallyl diphosphate. Residues Ser-216, Asn-218, and Ser-260 each coordinate isopentenyl diphosphate.

Belongs to the IspH family. It depends on [4Fe-4S] cluster as a cofactor.

It carries out the reaction isopentenyl diphosphate + 2 oxidized [2Fe-2S]-[ferredoxin] + H2O = (2E)-4-hydroxy-3-methylbut-2-enyl diphosphate + 2 reduced [2Fe-2S]-[ferredoxin] + 2 H(+). The catalysed reaction is dimethylallyl diphosphate + 2 oxidized [2Fe-2S]-[ferredoxin] + H2O = (2E)-4-hydroxy-3-methylbut-2-enyl diphosphate + 2 reduced [2Fe-2S]-[ferredoxin] + 2 H(+). It participates in isoprenoid biosynthesis; dimethylallyl diphosphate biosynthesis; dimethylallyl diphosphate from (2E)-4-hydroxy-3-methylbutenyl diphosphate: step 1/1. The protein operates within isoprenoid biosynthesis; isopentenyl diphosphate biosynthesis via DXP pathway; isopentenyl diphosphate from 1-deoxy-D-xylulose 5-phosphate: step 6/6. Its function is as follows. Catalyzes the conversion of 1-hydroxy-2-methyl-2-(E)-butenyl 4-diphosphate (HMBPP) into a mixture of isopentenyl diphosphate (IPP) and dimethylallyl diphosphate (DMAPP). Acts in the terminal step of the DOXP/MEP pathway for isoprenoid precursor biosynthesis. This is 4-hydroxy-3-methylbut-2-enyl diphosphate reductase from Trichlorobacter lovleyi (strain ATCC BAA-1151 / DSM 17278 / SZ) (Geobacter lovleyi).